We begin with the raw amino-acid sequence, 278 residues long: Large ribosomal subunit protein uL2 (278 aa).

Disordered regions lie at residues 1 to 58 (MAIR…GGGH) and 224 to 278 (VVMN…GKKR). Positions 23–33 (EITRDHPEKSL) are enriched in basic and acidic residues. Basic residues predominate over residues 37-58 (LHGRGGRNAHGRITTRHKGGGH). Residues 253-268 (PEGRTRKPKKASDKLI) are compositionally biased toward basic and acidic residues. The span at 269–278 (VRRRRTGKKR) shows a compositional bias: basic residues.

This sequence belongs to the universal ribosomal protein uL2 family. Part of the 50S ribosomal subunit. Forms a bridge to the 30S subunit in the 70S ribosome.

In terms of biological role, one of the primary rRNA binding proteins. Required for association of the 30S and 50S subunits to form the 70S ribosome, for tRNA binding and peptide bond formation. It has been suggested to have peptidyltransferase activity; this is somewhat controversial. Makes several contacts with the 16S rRNA in the 70S ribosome. The protein is Large ribosomal subunit protein uL2 of Mycolicibacterium vanbaalenii (strain DSM 7251 / JCM 13017 / BCRC 16820 / KCTC 9966 / NRRL B-24157 / PYR-1) (Mycobacterium vanbaalenii).